Reading from the N-terminus, the 286-residue chain is Inositol polyphosphate multikinase alpha (286 aa).

The disordered stretch occupies residues 1–22; it reads MQLKVPEHQVAGHIAKDGKPGP.

It belongs to the inositol phosphokinase (IPK) family. Phosphorylated. As to expression, detected in leaves, stems, roots, siliques and flowers. Highly expressed in root tissues, anthers, the stigma, pollen grains and growing pollen tubes.

The protein localises to the nucleus. The protein resides in the cell membrane. It catalyses the reaction 1D-myo-inositol 1,4,5-trisphosphate + 2 ATP = 1D-myo-inositol 1,3,4,5,6-pentakisphosphate + 2 ADP + 2 H(+). The enzyme catalyses 1D-myo-inositol 1,3,4,6-tetrakisphosphate + ATP = 1D-myo-inositol 1,3,4,5,6-pentakisphosphate + ADP + H(+). Its function is as follows. Inositol phosphate kinase with a broad substrate specificity. Phosphorylates inositol 1,4,5-trisphosphate (Ins(1,4,5)P3), inositol 1,4,5,6-tetrakisphosphate (Ins(1,4,5,6)P4), inositol 1,3,4,5-tetrakisphosphate (Ins(1,3,4,5)P4), inositol 1,3,4,6-tetrakisphosphate (Ins(1,3,4,6)P4) and inositol 1,2,3,4,6-pentakisphosphate (Ins(1,2,3,4,6)P5) but not inositol 1,4-bisphosphate (Ins(1,4)P2), inositol 1,3,4-trisphosphate (Ins(1,3,4)P3), inositol 1,2,6-trisphosphate (Ins(1,2,6)P3), inositol 3,4,5,6-tetrakisphosphate (Ins(3,4,5,6)P4), inositol 1,3,4,5,6-pentakisphosphate (Ins(1,3,4,5,6)P5), inositol 1,2,4,5,6-pentakisphosphate (Ins(1,2,4,5,6)P5) or inositol hexakisphosphate (InsP6). Regulates pollen and root development probably through the regulation of InsP3-mediated calcium accumulation. This is Inositol polyphosphate multikinase alpha (IPK2a) from Arabidopsis thaliana (Mouse-ear cress).